Consider the following 286-residue polypeptide: Aminoglycoside N(3)-acetyltransferase VIII (286 aa).

The protein belongs to the antibiotic N-acetyltransferase family.

It carries out the reaction a 2-deoxystreptamine antibiotic + acetyl-CoA = an N(3)-acetyl-2-deoxystreptamine antibiotic + CoA + H(+). In terms of biological role, resistance to neomycin. This Streptomyces fradiae (Streptomyces roseoflavus) protein is Aminoglycoside N(3)-acetyltransferase VIII (aacC8).